A 644-amino-acid polypeptide reads, in one-letter code: Cyclin-dependent kinase C-2 C (644 aa).

The 285-residue stretch at 105-389 (FQKLEKIGQG…ASSALNSEYF (285 aa)) folds into the Protein kinase domain. ATP contacts are provided by residues 111-119 (IGQGTYSSV) and Lys-134. A Phosphotyrosine modification is found at Tyr-116. The Proton acceptor role is filled by Asp-229. At Thr-263 the chain carries Phosphothreonine. Positions 420–427 (RKRANLKL) match the Nuclear localization signal motif. Basic and acidic residues predominate over residues 565 to 576 (SKLSRIGERHGS). The segment at 565–591 (SKLSRIGERHGSLDGSGLDFSQREEDS) is disordered.

It belongs to the protein kinase superfamily. CMGC Ser/Thr protein kinase family. CDC2/CDKX subfamily. In terms of processing, autophosphorylated. In terms of tissue distribution, expressed specifically in flowers and pollen.

The protein localises to the nucleus. The chain is Cyclin-dependent kinase C-2 C from Arabidopsis thaliana (Mouse-ear cress).